A 435-amino-acid polypeptide reads, in one-letter code: IAA-amino acid hydrolase ILR1-like 5 (435 aa).

An N-terminal signal peptide occupies residues 1–25 (MSFCKLVSFVLILHLLNSCLISCSS). The Mn(2+) site is built by C134, H136, E170, H194, and H397. The short motif at 432–435 (KDEL) is the Prevents secretion from ER element.

The protein belongs to the peptidase M20 family.

It localises to the endoplasmic reticulum lumen. In terms of biological role, hydrolyzes certain amino acid conjugates of the plant growth regulator indole-3-acetic acid (IAA). The polypeptide is IAA-amino acid hydrolase ILR1-like 5 (Arabidopsis thaliana (Mouse-ear cress)).